The primary structure comprises 194 residues: MDFEQLLDKSLNKVREEIKTELSKSLDEAIKLLNEGHTKIIQEYTQRINELITKTKEEIEGEKARLEVENKRTLLVEKEYWINKVYERVLEKIGEVVKTKEYKDAIQSILNKEIKEIEGEKITVYCSPNDKSTVEKVVGNNKNVTIKTDDKMLGGIRIYYEGSGLTRDFSLKLILDQVFDSMRGKISDMLFGGK.

This sequence belongs to the V-ATPase E subunit family. Has multiple subunits with at least A(3), B(3), C, D, E, F, H, I and proteolipid K(x).

Its subcellular location is the cell membrane. Functionally, component of the A-type ATP synthase that produces ATP from ADP in the presence of a proton gradient across the membrane. This Saccharolobus islandicus (strain Y.N.15.51 / Yellowstone #2) (Sulfolobus islandicus) protein is A-type ATP synthase subunit E.